A 246-amino-acid polypeptide reads, in one-letter code: DNA polymerase sliding clamp (246 aa).

The protein belongs to the PCNA family. In terms of assembly, homotrimer. The subunits circularize to form a toroid; DNA passes through its center. Replication factor C (RFC) is required to load the toroid on the DNA.

Sliding clamp subunit that acts as a moving platform for DNA processing. Responsible for tethering the catalytic subunit of DNA polymerase and other proteins to DNA during high-speed replication. This chain is DNA polymerase sliding clamp, found in Methanocella arvoryzae (strain DSM 22066 / NBRC 105507 / MRE50).